The sequence spans 353 residues: Protein RecA (353 aa).

Residue 67-74 coordinates ATP; that stretch reads GPESSGKT.

This sequence belongs to the RecA family.

Its subcellular location is the cytoplasm. Its function is as follows. Can catalyze the hydrolysis of ATP in the presence of single-stranded DNA, the ATP-dependent uptake of single-stranded DNA by duplex DNA, and the ATP-dependent hybridization of homologous single-stranded DNAs. It interacts with LexA causing its activation and leading to its autocatalytic cleavage. The sequence is that of Protein RecA from Shewanella woodyi (strain ATCC 51908 / MS32).